Reading from the N-terminus, the 356-residue chain is Histidinol-phosphate aminotransferase 1 (356 aa).

Lys-213 bears the N6-(pyridoxal phosphate)lysine mark.

It belongs to the class-II pyridoxal-phosphate-dependent aminotransferase family. Histidinol-phosphate aminotransferase subfamily. As to quaternary structure, homodimer. Pyridoxal 5'-phosphate is required as a cofactor.

It catalyses the reaction L-histidinol phosphate + 2-oxoglutarate = 3-(imidazol-4-yl)-2-oxopropyl phosphate + L-glutamate. Its pathway is amino-acid biosynthesis; L-histidine biosynthesis; L-histidine from 5-phospho-alpha-D-ribose 1-diphosphate: step 7/9. This chain is Histidinol-phosphate aminotransferase 1 (hisC1), found in Bordetella parapertussis (strain 12822 / ATCC BAA-587 / NCTC 13253).